A 419-amino-acid polypeptide reads, in one-letter code: 4-hydroxyphenylpyruvate dioxygenase (419 aa).

VOC domains follow at residues 41–187 (GYHH…FIQR) and 218–376 (AIDH…LFTK). Residues His221, His304, and Glu387 each contribute to the Fe cation site.

This sequence belongs to the 4HPPD family. It depends on Fe cation as a cofactor.

The enzyme catalyses 3-(4-hydroxyphenyl)pyruvate + O2 = homogentisate + CO2. The protein operates within amino-acid degradation; L-phenylalanine degradation; acetoacetate and fumarate from L-phenylalanine: step 3/6. The protein is 4-hydroxyphenylpyruvate dioxygenase (HPPD) of Zymoseptoria tritici (Speckled leaf blotch fungus).